Reading from the N-terminus, the 1186-residue chain is Probable inactive serine/threonine-protein kinase DDB_G0293184 (1186 aa).

The span at 1–12 shows a compositional bias: acidic residues; sequence MEQEDQQYEEDS. Disordered regions lie at residues 1–55 and 99–122; these read MEQE…NNDS and MEQQ…NTNF. 2 stretches are compositionally biased toward low complexity: residues 34–48 and 99–110; these read TTTE…TTPT and MEQQQQQQHLQP. Positions 173–437 constitute a Protein kinase domain; sequence YESPPTLGKY…VHDLLRHPWL (265 aa). Residues 179–187 and K205 each bind ATP; that span reads LGKYDKVIL. Disordered regions lie at residues 447–468 and 530–551; these read SSSS…GNVN and YNNY…NECG. A compositionally biased stretch (polar residues) spans 453–468; sequence QAHPTVQSNNLNGNVN. Over residues 530 to 545 the composition is skewed to low complexity; that stretch reads YNNYNNNNNNNNNTND. A coiled-coil region spans residues 631–659; it reads LKRTNQMANDLGRKYEILQSNIKRLEDYL. A compositionally biased stretch (polar residues) spans 766–784; the sequence is NNLDPSNNNESVNLSTSPG. Disordered regions lie at residues 766 to 911 and 959 to 988; these read NNLD…NGNN and ENKK…GDVS. The span at 785-836 shows a compositional bias: low complexity; sequence SLVNSNSNPSISNSLNNNNNNNNNNNNNNNGNPNVIITTNNNCNSNSNGNNI. Residues 847 to 896 show a composition bias toward basic and acidic residues; sequence KEVKEGKEIKEIKEPKEKDKDKEKDKDKEKDKDKEKDKDKEKEKDKDKEN. The stretch at 875–909 forms a coiled coil; sequence EKDKDKEKDKDKEKEKDKDKENNNNNNSNNNNNNG. A compositionally biased stretch (low complexity) spans 897–911; it reads NNNNNSNNNNNNGNN. Residues 969 to 978 show a composition bias toward polar residues; the sequence is LDSTNKQSPG. Residues 1004–1186 enclose the Rho-GAP domain; the sequence is VRLDDLMTRE…LSFPKFNLSV (183 aa).

It belongs to the protein kinase superfamily. STE Ser/Thr protein kinase family.

The protein is Probable inactive serine/threonine-protein kinase DDB_G0293184 of Dictyostelium discoideum (Social amoeba).